A 656-amino-acid chain; its full sequence is Vacuolar amino acid transporter 3 (656 aa).

The interval 1–109 (MSNSQSIKIK…VPSTSEDPDV (109 aa)) is disordered. Positions 15–28 (NENFASGSYSSRRS) are enriched in polar residues. Residues Ser37 and Ser53 each carry the phosphoserine modification. Residues 50 to 71 (ISPSESNLPNNVAENTTDTPVN) are compositionally biased toward polar residues. Over residues 75–97 (IRDENHNSRKGKDVTLNSDEAHS) the composition is skewed to basic and acidic residues. Position 172 is a phosphoserine (Ser172). The next 11 membrane-spanning stretches (helical) occupy residues 280 to 300 (AVLL…PKAF), 307 to 327 (FSSA…LLLI), 351 to 371 (FAIL…YISF), 389 to 409 (EYHL…LSLV), 419 to 439 (ALIA…WDVI), 457 to 477 (FSLF…ILPI), 494 to 514 (VMAA…AAFG), 537 to 557 (LYAI…IAII), 578 to 598 (YLRV…SSRL), 601 to 621 (FVSM…PPML), and 636 to 656 (DIFM…MTFF).

It belongs to the amino acid/polyamine transporter 2 family.

It is found in the endoplasmic reticulum membrane. The protein resides in the vacuole membrane. Involved in amino acid efflux from the vacuole to the cytoplasm. Capable of transporting large neutral amino acids including tyrosine, glutamine, asparagine, isoleucine and leucine. Required for spore formation. The protein is Vacuolar amino acid transporter 3 (avt3) of Schizosaccharomyces pombe (strain 972 / ATCC 24843) (Fission yeast).